Consider the following 160-residue polypeptide: Transcriptional repressor NrdR (160 aa).

Positions 1–11 (MRCPNCNSLDT) are enriched in polar residues. Residues 1-20 (MRCPNCNSLDTQVKDSRPTE) are disordered. The segment at 3–34 (CPNCNSLDTQVKDSRPTEDSSVIRRRRVCIAC) is a zinc-finger region. Residues 49–139 (LIVIKRNGRR…VYRNFREAKD (91 aa)) form the ATP-cone domain.

The protein belongs to the NrdR family. Requires Zn(2+) as cofactor.

Functionally, negatively regulates transcription of bacterial ribonucleotide reductase nrd genes and operons by binding to NrdR-boxes. This is Transcriptional repressor NrdR from Rhodopseudomonas palustris (strain ATCC BAA-98 / CGA009).